The chain runs to 180 residues: uncharacterized protein (180 aa).

Residues 35-163 (LRHRATYIVV…TPDSLKALAL (129 aa)) form the Nudix hydrolase domain. Positions 72–94 (GGVVQADEQLLESARREAEEELG) match the Nudix box motif. The Mg(2+) site is built by Glu-88 and Glu-92.

The protein belongs to the Nudix hydrolase family. Mg(2+) serves as cofactor.

This is an uncharacterized protein from Escherichia coli O157:H7.